A 335-amino-acid polypeptide reads, in one-letter code: MDLNAILIILGVIALIILVAHGIWSNRCEKSQYFENSKNFTREARIREPQENQQYQTADQSQSDFQRNLLETDNDCFSSESAHNSHQPLYHYSEQSAVQSVDQIKIRLPDSEPNYVMQERFSPKHTDYASMSIEELEKSIDLDEGINSSSQHLRQELAQISGQSIADDKVNIEEHMFTESTISFVEPQTNTESQQVVEKTKSGNSSFIMLYVVASENQGFSGLQLTKTLDELGFIFGKKQIYHRHVDLSITSPVLFSVANIEQPGTFDLTNIADFYTVGIALFMQSPSYGNATANLRMMIRAAKTIAQDLDGVVVTEQQEIFDEQAERDYLARVS.

Over 1 to 4 (MDLN) the chain is Periplasmic. Residues 5-25 (AILIILGVIALIILVAHGIWS) form a helical membrane-spanning segment. The Cytoplasmic portion of the chain corresponds to 26 to 335 (NRCEKSQYFE…AERDYLARVS (310 aa)).

Belongs to the ZipA family. Interacts with FtsZ via their C-terminal domains.

It localises to the cell inner membrane. Functionally, essential cell division protein that stabilizes the FtsZ protofilaments by cross-linking them and that serves as a cytoplasmic membrane anchor for the Z ring. Also required for the recruitment to the septal ring of downstream cell division proteins. The chain is Cell division protein ZipA from Histophilus somni (strain 129Pt) (Haemophilus somnus).